A 210-amino-acid chain; its full sequence is 7-carboxy-7-deazaguanine synthase (210 aa).

Residues 12 to 14 (LQG) and R27 each bind substrate. The Radical SAM core domain maps to 18 to 210 (QAGKAAVFCR…VQTHKYLGLP (193 aa)). Residues C31, C46, and C49 each coordinate [4Fe-4S] cluster. T51 serves as a coordination point for Mg(2+). T90 is a substrate binding site. Residues G92, 133-135 (SPK), and 173-176 (QPMD) contribute to the S-adenosyl-L-methionine site. P210 provides a ligand contact to substrate.

Belongs to the radical SAM superfamily. 7-carboxy-7-deazaguanine synthase family. As to quaternary structure, homodimer. Requires [4Fe-4S] cluster as cofactor. S-adenosyl-L-methionine is required as a cofactor. It depends on Mg(2+) as a cofactor.

It catalyses the reaction 6-carboxy-5,6,7,8-tetrahydropterin + H(+) = 7-carboxy-7-deazaguanine + NH4(+). It participates in purine metabolism; 7-cyano-7-deazaguanine biosynthesis. Its function is as follows. Catalyzes the complex heterocyclic radical-mediated conversion of 6-carboxy-5,6,7,8-tetrahydropterin (CPH4) to 7-carboxy-7-deazaguanine (CDG), a step common to the biosynthetic pathways of all 7-deazapurine-containing compounds. In Caulobacter vibrioides (strain ATCC 19089 / CIP 103742 / CB 15) (Caulobacter crescentus), this protein is 7-carboxy-7-deazaguanine synthase.